The primary structure comprises 392 residues: 5-amino-6-(D-ribitylamino)uracil--L-tyrosine 4-hydroxyphenyl transferase (392 aa).

The Radical SAM core domain maps to 60–307 (VTYVVNRNIN…MAIARLYLGK (248 aa)). Positions 74, 78, and 81 each coordinate [4Fe-4S] cluster.

Belongs to the radical SAM superfamily. CofH family. As to quaternary structure, consists of two subunits, CofG and CofH. [4Fe-4S] cluster serves as cofactor.

The catalysed reaction is 5-amino-6-(D-ribitylamino)uracil + L-tyrosine + S-adenosyl-L-methionine = 5-amino-5-(4-hydroxybenzyl)-6-(D-ribitylimino)-5,6-dihydrouracil + 2-iminoacetate + 5'-deoxyadenosine + L-methionine + H(+). Its pathway is cofactor biosynthesis; coenzyme F0 biosynthesis. Its function is as follows. Catalyzes the radical-mediated synthesis of 5-amino-5-(4-hydroxybenzyl)-6-(D-ribitylimino)-5,6-dihydrouracil from 5-amino-6-(D-ribitylamino)uracil and L-tyrosine. The chain is 5-amino-6-(D-ribitylamino)uracil--L-tyrosine 4-hydroxyphenyl transferase from Synechocystis sp. (strain ATCC 27184 / PCC 6803 / Kazusa).